The sequence spans 157 residues: uncharacterized protein (157 aa).

Residues 1 to 30 form the signal peptide; it reads MLPEQGPQPSTMPLWCLLAACTSLPRQAAT.

Its subcellular location is the secreted. This is an uncharacterized protein from Homo sapiens (Human).